The primary structure comprises 64 residues: MAKNKGTRILITLECTECRTNINKRSAGVSRYLTQKNRRNNPQRMELKKYCPHCNKPTIHKEIK.

It belongs to the bacterial ribosomal protein bL33 family.

The protein resides in the plastid. The protein localises to the chloroplast. The sequence is that of Large ribosomal subunit protein bL33c from Thalassiosira pseudonana (Marine diatom).